The chain runs to 423 residues: Maltooligosaccharide ABC transporter solute-binding lipoprotein (423 aa).

The first 24 residues, 1-24 (MSSKFMKSAAVLGTATLASLLLVA), serve as a signal peptide directing secretion. C25 is lipidated: N-palmitoyl cysteine. The S-diacylglycerol cysteine moiety is linked to residue C25. Substrate is bound by residues Y52, D77, D83, 103–104 (DR), E148, D193, N196, 251–254 (EGAG), W274, and K307.

The protein belongs to the bacterial solute-binding protein 1 family.

The protein localises to the cell membrane. Its function is as follows. Part of an ABC transporter complex involved in the uptake of maltodextrins. Binds glycogen-derived linear maltooligosaccharides increasing in size from maltotriose to maltooctaose with the highest affinity for maltotriose. Has a very weak affinity for maltose. Has also a very low affinity for maltotetraitol, indicating that the binding is selective for maltooligosaccharides with an intact reducing end. The chain is Maltooligosaccharide ABC transporter solute-binding lipoprotein from Streptococcus pneumoniae serotype 4 (strain ATCC BAA-334 / TIGR4).